The sequence spans 264 residues: NAD-capped RNA hydrolase NudC (264 aa).

Residue Arg70 participates in substrate binding. Cys99 and Cys102 together coordinate Zn(2+). Glu112 serves as a coordination point for substrate. Residues Cys117 and Cys122 each coordinate Zn(2+). Tyr127 provides a ligand contact to substrate. One can recognise a Nudix hydrolase domain in the interval 128-252 (PVICPCIIVA…TIALKLIEHT (125 aa)). A divalent metal cation-binding residues include Ala161, Glu177, and Glu181. A Nudix box motif is present at residues 162-183 (GFVEVGETFEQAVHREVLEETG). 195-202 (QPWAFPNS) is a substrate binding site. Glu222 contacts a divalent metal cation. Position 245 (Ala245) interacts with substrate.

It belongs to the Nudix hydrolase family. NudC subfamily. As to quaternary structure, homodimer. Mg(2+) is required as a cofactor. The cofactor is Mn(2+). It depends on Zn(2+) as a cofactor.

The catalysed reaction is a 5'-end NAD(+)-phospho-ribonucleoside in mRNA + H2O = a 5'-end phospho-adenosine-phospho-ribonucleoside in mRNA + beta-nicotinamide D-ribonucleotide + 2 H(+). It catalyses the reaction NAD(+) + H2O = beta-nicotinamide D-ribonucleotide + AMP + 2 H(+). The enzyme catalyses NADH + H2O = reduced beta-nicotinamide D-ribonucleotide + AMP + 2 H(+). MRNA decapping enzyme that specifically removes the nicotinamide adenine dinucleotide (NAD) cap from a subset of mRNAs by hydrolyzing the diphosphate linkage to produce nicotinamide mononucleotide (NMN) and 5' monophosphate mRNA. The NAD-cap is present at the 5'-end of some mRNAs and stabilizes RNA against 5'-processing. Has preference for mRNAs with a 5'-end purine. Catalyzes the hydrolysis of a broad range of dinucleotide pyrophosphates. The protein is NAD-capped RNA hydrolase NudC of Pasteurella multocida (strain Pm70).